Reading from the N-terminus, the 292-residue chain is Putative pyruvate, phosphate dikinase regulatory protein (292 aa).

Residue G155 to T162 coordinates ADP.

It belongs to the pyruvate, phosphate/water dikinase regulatory protein family. PDRP subfamily.

The enzyme catalyses N(tele)-phospho-L-histidyl/L-threonyl-[pyruvate, phosphate dikinase] + ADP = N(tele)-phospho-L-histidyl/O-phospho-L-threonyl-[pyruvate, phosphate dikinase] + AMP + H(+). It carries out the reaction N(tele)-phospho-L-histidyl/O-phospho-L-threonyl-[pyruvate, phosphate dikinase] + phosphate + H(+) = N(tele)-phospho-L-histidyl/L-threonyl-[pyruvate, phosphate dikinase] + diphosphate. Functionally, bifunctional serine/threonine kinase and phosphorylase involved in the regulation of the pyruvate, phosphate dikinase (PPDK) by catalyzing its phosphorylation/dephosphorylation. This is Putative pyruvate, phosphate dikinase regulatory protein from Acidiphilium cryptum (strain JF-5).